Here is a 238-residue protein sequence, read N- to C-terminus: Probable transcriptional regulatory protein SPD_1725 (238 aa).

It belongs to the TACO1 family. YeeN subfamily.

The protein resides in the cytoplasm. The chain is Probable transcriptional regulatory protein SPD_1725 from Streptococcus pneumoniae serotype 2 (strain D39 / NCTC 7466).